We begin with the raw amino-acid sequence, 181 residues long: UPF0340 protein OB2986 (181 aa).

It belongs to the UPF0340 family.

The protein is UPF0340 protein OB2986 of Oceanobacillus iheyensis (strain DSM 14371 / CIP 107618 / JCM 11309 / KCTC 3954 / HTE831).